We begin with the raw amino-acid sequence, 193 residues long: Sporulation-specific transcriptional regulator GerR (193 aa).

The HTH myb-type domain maps to 1–61 (MTITRQDAWT…RWNSYVRKQY (61 aa)). A DNA-binding region (H-T-H motif) is located at residues 35–57 (FEEVGRALTRTAAACGFRWNSYV). Residues 122–177 (AQEFQLEREKLKEQIQSLQKELEDLRSENQTLRNQLEMTEEDYKALIDIMDRARKM) adopt a coiled-coil conformation.

The protein belongs to the RsfA transcriptional regulator family.

Its function is as follows. Transcriptional factor that regulates the expression of several late sporulation genes. Controls genes of both sigma-E and sigma-K regulons, acting alone on some genes and in conjunction with SpoIIID or GerE on others. Regulates, directly or indirectly, the expression of genes encoding coat proteins such as cgeA, cotB, cotC, cotG, cotU and cotY. Controls late sporulation genes in two ways: directly, by binding to the promoter region of genes such as cotB, cotU and spoVIF, and acting directly on their transcription, and indirectly, through the activation of SpoVIF, which stabilizes the transcriptional activator GerE and consequently induces the expression of the GerE-dependent genes, such as cotC and cotG. Its effect is strongly positive on spoVIF, cotC, and cotG, weakly positive on cotB, and negative on cotU. In Bacillus subtilis (strain 168), this protein is Sporulation-specific transcriptional regulator GerR.